Consider the following 534-residue polypeptide: Glycerol kinase 5 (534 aa).

Positions 33 and 34 each coordinate ATP. Glycerol-binding residues include R103, D280, and Q281. Positions 302, 345, and 445 each coordinate ATP.

It belongs to the FGGY kinase family. As to expression, expressed predominantly in sebaceous glands.

The protein localises to the cytoplasm. It catalyses the reaction glycerol + ATP = sn-glycerol 3-phosphate + ADP + H(+). Its pathway is polyol metabolism; glycerol degradation via glycerol kinase pathway; sn-glycerol 3-phosphate from glycerol: step 1/1. In terms of biological role, skin-specific kinase that plays a key role in glycerol metabolism, catalyzing its phosphorylation to produce sn-glycerol 3-phosphate. Involved in skin-specific regulation of sterol regulatory element-binding protein (SREBP) processing and lipid biosynthesis. The sequence is that of Glycerol kinase 5 (Gk5) from Mus musculus (Mouse).